Consider the following 424-residue polypeptide: Steryl acetyl hydrolase 1 (424 aa).

A2 is subject to N-acetylalanine. Residues 2 to 45 (AANSGLDSKVEYYRLQENEIISAVSSEDADQNDAGFRLSTIHLH) lie on the Cytoplasmic side of the membrane. The helical; Signal-anchor for type II membrane protein transmembrane segment at 46-66 (LFHGLKFAALLFTVVPVFIIL) threads the bilayer. Topologically, residues 67–424 (DSMKIIFQRK…IARILEFMQS (358 aa)) are lumenal. N-linked (GlcNAc...) asparagine glycosylation is present at N85. Residues 176–178 (HGG) carry the Involved in the stabilization of the negatively charged intermediate by the formation of the oxyanion hole motif. S250 is an active-site residue. N283 carries an N-linked (GlcNAc...) asparagine glycan. H395 is an active-site residue. Residue N401 is glycosylated (N-linked (GlcNAc...) asparagine).

It belongs to the 'GDXG' lipolytic enzyme family.

It is found in the endoplasmic reticulum membrane. Functionally, required for the deacetylation of acetylated sterols. Involved in the resistance to eugenol and pregnenolone toxicity. This is Steryl acetyl hydrolase 1 (SAY1) from Saccharomyces cerevisiae (strain ATCC 204508 / S288c) (Baker's yeast).